A 366-amino-acid polypeptide reads, in one-letter code: Dof zinc finger protein DOF1.3 (366 aa).

The tract at residues Asp22–Lys103 is disordered. Composition is skewed to low complexity over residues Ser25–Leu45 and Thr56–Asn69. Composition is skewed to basic and acidic residues over residues Glu70–Ser83 and Glu91–Lys103. The segment at Leu105–Gly159 adopts a Dof-type zinc-finger fold. Residues Cys107, Cys110, Cys132, and Cys135 each contribute to the Zn(2+) site.

It localises to the nucleus. Its function is as follows. Transcription factor that binds specifically to a 5'-AA[AG]G-3' consensus core sequence. The chain is Dof zinc finger protein DOF1.3 (DOF1.3) from Arabidopsis thaliana (Mouse-ear cress).